Here is a 457-residue protein sequence, read N- to C-terminus: Argininosuccinate lyase (457 aa).

The protein belongs to the lyase 1 family. Argininosuccinate lyase subfamily.

It is found in the cytoplasm. The enzyme catalyses 2-(N(omega)-L-arginino)succinate = fumarate + L-arginine. Its pathway is amino-acid biosynthesis; L-arginine biosynthesis; L-arginine from L-ornithine and carbamoyl phosphate: step 3/3. In Yersinia pseudotuberculosis serotype IB (strain PB1/+), this protein is Argininosuccinate lyase.